The sequence spans 288 residues: Homoserine kinase (288 aa).

Residue 79 to 89 (PPARGLGSSSA) participates in ATP binding.

Belongs to the GHMP kinase family. Homoserine kinase subfamily.

Its subcellular location is the cytoplasm. The enzyme catalyses L-homoserine + ATP = O-phospho-L-homoserine + ADP + H(+). It functions in the pathway amino-acid biosynthesis; L-threonine biosynthesis; L-threonine from L-aspartate: step 4/5. Its function is as follows. Catalyzes the ATP-dependent phosphorylation of L-homoserine to L-homoserine phosphate. This is Homoserine kinase from Listeria monocytogenes serovar 1/2a (strain ATCC BAA-679 / EGD-e).